A 102-amino-acid polypeptide reads, in one-letter code: DET1- and DDB1-associated protein 1 (102 aa).

A disordered region spans residues 67 to 102 (NAAKKRDQEQVEIEGENSAPPRKIARTDSQDMNEDT).

The protein belongs to the DDA1 family. In terms of assembly, component of numerous DCX (DDB1-CUL4-X-box) E3 ubiquitin-protein ligase complexes which consist of a core of DDB1, cullin-4 (CUL4A or CUL4B), DDA1 and RBX1.

It functions in the pathway protein modification; protein ubiquitination. Its function is as follows. Functions as a component of numerous distinct DCX (DDB1-CUL4-X-box) E3 ubiquitin-protein ligase complexes which mediate the ubiquitination and subsequent proteasomal degradation of target proteins. In the DCX complexes, acts as a scaffolding subunit required to stabilize the complex. The chain is DET1- and DDB1-associated protein 1 from Gallus gallus (Chicken).